Here is a 54-residue protein sequence, read N- to C-terminus: Ovomucoid (54 aa).

Residues 4 to 54 (VDCSDYPKPACLLEYMPLCGSDNKTYDNKCSFCNAVVDSNGTLSLSHFGKC) form the Kazal-like domain. 3 disulfide bridges follow: cysteine 6-cysteine 36, cysteine 14-cysteine 33, and cysteine 22-cysteine 54. Asparagine 43 is a glycosylation site (N-linked (GlcNAc...) asparagine).

The protein localises to the secreted. This Opisthocomus hoazin (Hoatzin) protein is Ovomucoid.